The following is a 428-amino-acid chain: Type II methyltransferase M.BanI (428 aa).

The 415-residue stretch at 3 to 417 (IKFVDLFAGI…EDLFQNNVNE (415 aa)) folds into the SAM-dependent MTase C5-type domain. The active site involves C76.

The protein belongs to the class I-like SAM-binding methyltransferase superfamily. C5-methyltransferase family. Monomer.

It catalyses the reaction a 2'-deoxycytidine in DNA + S-adenosyl-L-methionine = a 5-methyl-2'-deoxycytidine in DNA + S-adenosyl-L-homocysteine + H(+). A methylase, recognizes the double-stranded sequence 5'-GGYRCC-3', methylates C-4 on both strands, and protects the DNA from cleavage by the BanI endonuclease. The protein is Type II methyltransferase M.BanI (banIM) of Aneurinibacillus aneurinilyticus (Bacillus aneurinolyticus).